The sequence spans 55 residues: Mitochondrial import receptor subunit TOM7 homolog (55 aa).

The Cytoplasmic portion of the chain corresponds to Met-1–Gln-20. A helical transmembrane segment spans residues Phe-21–Ala-40. The Mitochondrial intermembrane portion of the chain corresponds to Asp-41–Gly-55.

It belongs to the Tom7 family. Forms part of the preprotein translocase complex of the outer mitochondrial membrane (TOM complex) which consists of at least 7 different proteins (TOMM5, TOMM6, TOMM7, TOMM20, TOMM22, TOMM40 and TOMM70).

Its subcellular location is the mitochondrion outer membrane. Its function is as follows. Required for assembly and stability of the TOM complex. Positive regulator of PRKN translocation to damaged mitochondria. Acts probably by stabilizing PINK1 on the outer membrane of depolarized mitochondria. The protein is Mitochondrial import receptor subunit TOM7 homolog (Tomm7) of Mus musculus (Mouse).